Consider the following 503-residue polypeptide: Aspartyl/glutamyl-tRNA(Asn/Gln) amidotransferase subunit B (503 aa).

It belongs to the GatB/GatE family. GatB subfamily. In terms of assembly, heterotrimer of A, B and C subunits.

It catalyses the reaction L-glutamyl-tRNA(Gln) + L-glutamine + ATP + H2O = L-glutaminyl-tRNA(Gln) + L-glutamate + ADP + phosphate + H(+). It carries out the reaction L-aspartyl-tRNA(Asn) + L-glutamine + ATP + H2O = L-asparaginyl-tRNA(Asn) + L-glutamate + ADP + phosphate + 2 H(+). Functionally, allows the formation of correctly charged Asn-tRNA(Asn) or Gln-tRNA(Gln) through the transamidation of misacylated Asp-tRNA(Asn) or Glu-tRNA(Gln) in organisms which lack either or both of asparaginyl-tRNA or glutaminyl-tRNA synthetases. The reaction takes place in the presence of glutamine and ATP through an activated phospho-Asp-tRNA(Asn) or phospho-Glu-tRNA(Gln). The sequence is that of Aspartyl/glutamyl-tRNA(Asn/Gln) amidotransferase subunit B from Cereibacter sphaeroides (strain ATCC 17029 / ATH 2.4.9) (Rhodobacter sphaeroides).